The chain runs to 249 residues: Putative TrmH family tRNA/rRNA methyltransferase (249 aa).

Positions 196, 216, and 225 each coordinate S-adenosyl-L-methionine.

Belongs to the class IV-like SAM-binding methyltransferase superfamily. RNA methyltransferase TrmH family.

The chain is Putative TrmH family tRNA/rRNA methyltransferase from Staphylococcus saprophyticus subsp. saprophyticus (strain ATCC 15305 / DSM 20229 / NCIMB 8711 / NCTC 7292 / S-41).